Consider the following 484-residue polypeptide: Phosphomethylpyrimidine synthase (484 aa).

Substrate-binding positions include Asn97, Met126, Tyr156, His192, 212 to 214 (SRG), 253 to 256 (DSLR), and Glu292. His296 provides a ligand contact to Zn(2+). Residue Tyr319 participates in substrate binding. Residue His360 coordinates Zn(2+). [4Fe-4S] cluster is bound by residues Cys440, Cys443, and Cys448.

The protein belongs to the ThiC family. [4Fe-4S] cluster serves as cofactor.

The catalysed reaction is 5-amino-1-(5-phospho-beta-D-ribosyl)imidazole + S-adenosyl-L-methionine = 4-amino-2-methyl-5-(phosphooxymethyl)pyrimidine + CO + 5'-deoxyadenosine + formate + L-methionine + 3 H(+). The protein operates within cofactor biosynthesis; thiamine diphosphate biosynthesis. Functionally, catalyzes the synthesis of the hydroxymethylpyrimidine phosphate (HMP-P) moiety of thiamine from aminoimidazole ribotide (AIR) in a radical S-adenosyl-L-methionine (SAM)-dependent reaction. The sequence is that of Phosphomethylpyrimidine synthase from Synechococcus sp. (strain CC9605).